A 1181-amino-acid polypeptide reads, in one-letter code: Clustered mitochondria protein homolog (1181 aa).

Residues 165-195 (AKAEALAKNEEVSEDEESEPEDDTPMKQSTQ) form a disordered region. A compositionally biased stretch (acidic residues) spans 176-187 (VSEDEESEPEDD). Positions 379–622 (DMARNQELLS…RLAPVDIAFL (244 aa)) constitute a Clu domain. The tract at residues 1130–1181 (GRLARQAPKPTATHQKEAPKKASKKTKGKGKGKDDKGEKLVAELKKKKAGKR) is disordered. Residues 1150 to 1159 (KASKKTKGKG) show a composition bias toward basic residues. Residues 1160–1173 (KGKDDKGEKLVAEL) are compositionally biased toward basic and acidic residues.

The protein belongs to the CLU family. As to quaternary structure, may associate with the eukaryotic translation initiation factor 3 (eIF-3) complex.

It localises to the cytoplasm. In terms of biological role, mRNA-binding protein involved in proper cytoplasmic distribution of mitochondria. In Yarrowia lipolytica (strain CLIB 122 / E 150) (Yeast), this protein is Clustered mitochondria protein homolog.